Here is a 171-residue protein sequence, read N- to C-terminus: Disulfide bond formation protein B (171 aa).

At 1–8 the chain is on the cytoplasmic side; the sequence is MQWSYRFV. The chain crosses the membrane as a helical span at residues 9–25; it reads SGLLVLASIVGMTFALY. The Periplasmic portion of the chain corresponds to 26-43; sequence LEHFKGLEPCPLCIFQRV. Cysteine 35 and cysteine 38 are disulfide-bonded. A helical membrane pass occupies residues 44–60; sequence GLMAMGIVALIAFLHNP. At 61 to 67 the chain is on the cytoplasmic side; it reads VSNAFKR. Residues 68–85 traverse the membrane as a helical segment; that stretch reads VYAFLATLGILWSVGVAI. Residues 86-142 are Periplasmic-facing; sequence RHVWLQTLPPDQVPSCGPGLNYLLDALPLKTVLQQVLQGSGECAAIHWTFLGQSLPV. A disulfide bond links cysteine 101 and cysteine 128. A helical transmembrane segment spans residues 143–161; the sequence is WSLAYFSLILLVCVWQLLR. Over 162 to 171 the chain is Cytoplasmic; the sequence is RYPVIVTKKK.

The protein belongs to the DsbB family.

Its subcellular location is the cell inner membrane. Required for disulfide bond formation in some periplasmic proteins. Acts by oxidizing the DsbA protein. The polypeptide is Disulfide bond formation protein B (Acinetobacter baylyi (strain ATCC 33305 / BD413 / ADP1)).